Consider the following 362-residue polypeptide: Very-long-chain (3R)-3-hydroxyacyl-CoA dehydratase 3 (362 aa).

Met-1 is modified (N-acetylmethionine). At 1–149 the chain is on the cytoplasmic side; that stretch reads METQVLTPHV…ETLTNLKKGY (149 aa). One can recognise a CS domain in the interval 5-94; that stretch reads VLTPHVYWAQ…KGSHWWERLT (90 aa). A Phosphothreonine modification is found at Thr-7. The stretch at 111-138 forms a coiled coil; it reads LDESDAEMELRAKEEERLNKLRLEREGS. Ser-114 bears the Phosphoserine mark. The chain crosses the membrane as a helical span at residues 150–170; that stretch reads LFMYNLVQLLGFSWIFVNLTV. At 171–189 the chain is on the lumenal side; sequence RFFILGKESFYDTFHNVAD. Residues 190-210 traverse the membrane as a helical segment; the sequence is MMYFCQMLALVETLNAAIGVT. At 211–212 the chain is on the cytoplasmic side; it reads ST. A helical transmembrane segment spans residues 213 to 233; that stretch reads PVLPALIQFLGRNFILFLVFG. Over 234–242 the chain is Lumenal; sequence TMEEMQNKA. A helical membrane pass occupies residues 243-263; the sequence is VVFFVFYSWSAIEIFRYPFYM. The Cytoplasmic segment spans residues 264–280; sequence LSCIDMDWKVLTWLRYT. A helical transmembrane segment spans residues 281–301; it reads MWIPLYPLGCLSEAVAVIQSI. Catalysis depends on residues Tyr-286 and Glu-293. Topologically, residues 302–322 are lumenal; that stretch reads PVFNESGRFSFTLPYPVKMKV. Residues 323 to 343 traverse the membrane as a helical segment; the sequence is RFSFFLQVYLVMLFLGLYINF. At 344-362 the chain is on the cytoplasmic side; the sequence is RHLYKQRRRRYGQKKKKLH.

Belongs to the very long-chain fatty acids dehydratase HACD family. In terms of assembly, may interact with enzymes of the ELO family (including ELOVL1); with those enzymes that mediate condensation, the first of the four steps of the reaction cycle responsible for fatty acids elongation, may be part of a larger fatty acids elongase complex. Interacts with RAC1. Associates with internalized insulin receptor/INSR complexes on Golgi/endosomal membranes; HACD3/PTPLAD1 together with ATIC and PRKAA2/AMPK2 is proposed to be part of a signaling network regulating INSR autophosphorylation and endocytosis.

Its subcellular location is the endoplasmic reticulum membrane. The catalysed reaction is a very-long-chain (3R)-3-hydroxyacyl-CoA = a very-long-chain (2E)-enoyl-CoA + H2O. It carries out the reaction (3R)-hydroxyhexadecanoyl-CoA = (2E)-hexadecenoyl-CoA + H2O. The protein operates within lipid metabolism; fatty acid biosynthesis. Catalyzes the third of the four reactions of the long-chain fatty acids elongation cycle. This endoplasmic reticulum-bound enzymatic process, allows the addition of two carbons to the chain of long- and very long-chain fatty acids/VLCFAs per cycle. This enzyme catalyzes the dehydration of the 3-hydroxyacyl-CoA intermediate into trans-2,3-enoyl-CoA, within each cycle of fatty acid elongation. Thereby, it participates in the production of VLCFAs of different chain lengths that are involved in multiple biological processes as precursors of membrane lipids and lipid mediators. Involved in Rac1-signaling pathways leading to the modulation of gene expression. Promotes insulin receptor/INSR autophosphorylation and is involved in INSR internalization. The protein is Very-long-chain (3R)-3-hydroxyacyl-CoA dehydratase 3 of Mus musculus (Mouse).